The chain runs to 159 residues: Lipoprotein signal peptidase (159 aa).

A run of 2 helical transmembrane segments spans residues 64–84 and 89–109; these read SVQW…IWVV and PPFW…GNGI. Catalysis depends on residues Asp119 and Asp135. The helical transmembrane segment at 130–150 threads the bilayer; sequence IFNPADIAINLAVLCFLVDLW.

This sequence belongs to the peptidase A8 family.

The protein resides in the cell inner membrane. It carries out the reaction Release of signal peptides from bacterial membrane prolipoproteins. Hydrolyzes -Xaa-Yaa-Zaa-|-(S,diacylglyceryl)Cys-, in which Xaa is hydrophobic (preferably Leu), and Yaa (Ala or Ser) and Zaa (Gly or Ala) have small, neutral side chains.. Its pathway is protein modification; lipoprotein biosynthesis (signal peptide cleavage). Functionally, this protein specifically catalyzes the removal of signal peptides from prolipoproteins. This is Lipoprotein signal peptidase from Parasynechococcus marenigrum (strain WH8102).